The chain runs to 354 residues: Rhodopsin (354 aa).

Residues 1–36 (MNGTEGPYFNVPMVNTTGIVRSPYEYPQYYLVSPAA) are Extracellular-facing. Asn-2 and Asn-15 each carry an N-linked (GlcNAc...) asparagine glycan. The helical transmembrane segment at 37–61 (YAALGAYMFFLILVGFPINFLTLYV) threads the bilayer. Residues 62 to 73 (TLEHKKLRTPLN) are Cytoplasmic-facing. Residues 74-96 (YILLNLAVADLFMVFGGFTTTMY) traverse the membrane as a helical segment. Topologically, residues 97–110 (TSMHGYFVLGRLGC) are extracellular. Cys-110 and Cys-187 are disulfide-bonded. A helical membrane pass occupies residues 111-133 (NLEGFFATLGGEIGLWSLVVLAI). Positions 134–136 (ERW) match the 'Ionic lock' involved in activated form stabilization motif. Topologically, residues 134–152 (ERWVVVCKPISNFRFGENH) are cytoplasmic. The chain crosses the membrane as a helical span at residues 153–173 (AIMGLVFTWIMAASCAVPPLV). The Extracellular portion of the chain corresponds to 174–202 (GWSRYIPEGMQCSCGVDYYTRAEGFNNES). The helical transmembrane segment at 203–224 (FVVYMFVCHFLIPLIVVFFCYG) threads the bilayer. The Cytoplasmic segment spans residues 225-252 (RLLCAVKEAAAAQQESETTQRAEREVTR). A helical membrane pass occupies residues 253-274 (MVVIMVIGFLVCWLPYASVAWY). Over 275 to 286 (IFTNQGSEFGPL) the chain is Extracellular. Residues 287–308 (FMTIPAFFAKSSSIYNPAIYIC) traverse the membrane as a helical segment. Lys-296 carries the N6-(retinylidene)lysine modification. The Cytoplasmic segment spans residues 309–354 (MNKQFRNCMITTLCCGKNPFEEEEGASTTASKTEASSVSSSSVSPA). Residues Cys-322 and Cys-323 are each lipidated (S-palmitoyl cysteine). The interval 332-354 (EGASTTASKTEASSVSSSSVSPA) is disordered. The span at 334–354 (ASTTASKTEASSVSSSSVSPA) shows a compositional bias: low complexity.

Belongs to the G-protein coupled receptor 1 family. Opsin subfamily. In terms of processing, phosphorylated on some or all of the serine and threonine residues present in the C-terminal region. Contains one covalently linked retinal chromophore.

Its subcellular location is the membrane. The protein resides in the cell projection. It localises to the cilium. It is found in the photoreceptor outer segment. Photoreceptor required for image-forming vision at low light intensity. While most salt water fish species use retinal as chromophore, most freshwater fish use 3-dehydroretinal, or a mixture of retinal and 3-dehydroretinal. Light-induced isomerization of 11-cis to all-trans retinal triggers a conformational change that activates signaling via G-proteins. Subsequent receptor phosphorylation mediates displacement of the bound G-protein alpha subunit by arrestin and terminates signaling. The sequence is that of Rhodopsin (rho) from Oryzias latipes (Japanese rice fish).